The primary structure comprises 600 residues: Putative acetyltransferase MPN_114 (600 aa).

His-323 (proton acceptor) is an active-site residue. Residue Thr-396–Glu-409 coordinates CoA.

Belongs to the carnitine/choline acetyltransferase family.

This chain is Putative acetyltransferase MPN_114, found in Mycoplasma pneumoniae (strain ATCC 29342 / M129 / Subtype 1) (Mycoplasmoides pneumoniae).